Reading from the N-terminus, the 694-residue chain is LMBR1 domain-containing protein 2 homolog (694 aa).

Topologically, residues 1-3 (MAY) are extracellular. A helical membrane pass occupies residues 4–26 (LLSFGIVAALFLASISLYRYGNI). The Cytoplasmic segment spans residues 27-30 (PRQH). Residues 31–51 (ILVTLSVLTAWCFSFLIVFTI) form a helical membrane-spanning segment. Topologically, residues 52 to 106 (PLDVTSTLYRQCVEEHRPTPAPNVTNTSSATVGPPPQCQEPWGMVPASVFPNLWR) are extracellular. N-linked (GlcNAc...) asparagine glycosylation is found at Asn74 and Asn77. A helical transmembrane segment spans residues 107-127 (IIYWSSQFLTWLIMPLMQSYL). Residues 128-144 (KAGDFTVKGKLKSALIE) lie on the Cytoplasmic side of the membrane. The chain crosses the membrane as a helical span at residues 145–165 (NAIYYGSYLFICGVLLIYIAV). The Extracellular portion of the chain corresponds to 166 to 181 (KGESLDWQKLKAIASS). Residues 182-202 (ASNTWGLFLLILLLGYALVEV) form a helical membrane-spanning segment. At 203–381 (PRSLWNNAKP…ECLLKAPFLK (179 aa)) the chain is on the cytoplasmic side. The stretch at 222 to 249 (KAAKLSTEKAEAEEHVDDILESLQGLSR) forms a coiled coil. Residues 382–402 (TMCVLTATMSAMVVWSELTFF) traverse the membrane as a helical segment. At 403–426 (SRHPVLSIFANVIYVAKESYDFFT) the chain is on the extracellular side. A helical membrane pass occupies residues 427–447 (IEVFSMVVLCYFFYCTYSTIL). Residues 448–467 (RIRFLNLYYLAPHHQTNEHS) lie on the Cytoplasmic side of the membrane. Residues 468–488 (LIFSGMLLCRLTPPMCLNFLG) traverse the membrane as a helical segment. Residues 489 to 514 (LIHMDTHIIPNRIMETVYTQIMGHMD) lie on the Extracellular side of the membrane. The chain crosses the membrane as a helical span at residues 515–535 (VIGIISNGFNIYFPMCMLAFC). Topologically, residues 536–694 (LATWFSLGSR…PPPRGLFDDV (159 aa)) are cytoplasmic. Residues 564–592 (ELVQEGKDLIAREKRRRQRAEEAMARRRD) adopt a coiled-coil conformation. A disordered region spans residues 673–694 (DYEAETDGRIVGPPPRGLFDDV).

The protein belongs to the LIMR family.

The protein localises to the membrane. In Drosophila melanogaster (Fruit fly), this protein is LMBR1 domain-containing protein 2 homolog.